Consider the following 246-residue polypeptide: Trypsin-5 (246 aa).

The signal sequence occupies residues 1–15 (MNSLLFLALVGAAVA). Residues 16 to 23 (FPVDDDDK) constitute a propeptide, activation peptide. Residues 24–244 (IVGGYTCREN…YVDWIQDTIA (221 aa)) form the Peptidase S1 domain. A disulfide bond links Cys48 and Cys64. Active-site charge relay system residues include His63 and Asp107. 3 cysteine pairs are disulfide-bonded: Cys139–Cys206, Cys171–Cys185, and Cys196–Cys220. Ser200 (charge relay system) is an active-site residue.

The protein belongs to the peptidase S1 family. Post-translationally, proteolytically cleaved and activated by an autocatalytic mechanism. Cleavage by CTRC inhibits autoactivation. In terms of tissue distribution, expressed in the heart, lung, brain, kidney, liver, epididymis, ovary and uterus. Expression in the testis is limited to round and elongating spermatids.

It localises to the cytoplasmic vesicle. The protein resides in the secretory vesicle. Its subcellular location is the acrosome. The enzyme catalyses Preferential cleavage: Arg-|-Xaa, Lys-|-Xaa.. Activated by autocatalytic cleavage. Cleavage by CTRC inhibits autoactivation. Its function is as follows. Serine protease capable of autoactivation. The chain is Trypsin-5 from Mus musculus (Mouse).